Reading from the N-terminus, the 158-residue chain is Histone H3-like centromeric protein CSE4 (158 aa).

A compositionally biased stretch (polar residues) spans 1-18 (MARISTSSNRPVPTSSAL). The segment at 1-59 (MARISTSSNRPVPTSSALRRQRERDDGGRSTRAPGHNTGLYGNQPGDPPTIRSTNTTVK) is disordered. The segment covering 20–29 (RQRERDDGGR) has biased composition (basic and acidic residues). The H3-like stretch occupies residues 54–157 (TNTTVKRRYR…IQLARRIRGN (104 aa)).

Belongs to the histone H3 family. Component of centromeric nucleosomes, where DNA is wrapped around a histone octamer core. The octamer contains two molecules each of H2A, H2B, CSE4/CENPA and H4 assembled in one CSE4-H4 heterotetramer and two H2A-H2B heterodimers. Interacts with the inner kinetochore. Post-translationally, ubiquitinated. Is degraded through ubiquitin-mediated proteolysis when not protected by its association to the kinetochore.

The protein resides in the nucleus. It localises to the chromosome. Its subcellular location is the centromere. In terms of biological role, histone H3-like nucleosomal protein that is specifically found in centromeric nucleosomes. Replaces conventional H3 in the nucleosome core of centromeric chromatin that serves as an assembly site for the inner kinetochore. Required for recruitment and assembly of kinetochore proteins, mitotic progression and chromosome segregation. May serve as an epigenetic mark that propagates centromere identity through replication and cell division. The sequence is that of Histone H3-like centromeric protein CSE4 (CSE4) from Millerozyma farinosa (Yeast).